Here is a 418-residue protein sequence, read N- to C-terminus: Dwarfin sma-2 (418 aa).

The MH1 domain maps to 8–134 (KKITERLKWK…YKRVHATGVL (127 aa)). Zn(2+)-binding residues include C62, C107, C119, and H124. The region spanning 222 to 418 (WATVSYYELN…PTPRPISSIS (197 aa)) is the MH2 domain.

This sequence belongs to the dwarfin/SMAD family.

Its subcellular location is the cytoplasm. It localises to the nucleus. Functionally, involved in TGF-beta pathway. Plays a role in male tail tip morphogenesis. The sequence is that of Dwarfin sma-2 from Caenorhabditis elegans.